Reading from the N-terminus, the 143-residue chain is ATP synthase F(0) complex subunit C2, mitochondrial (143 aa).

The N-terminal 68 residues, 1–68 (MYTCAKFVST…RSFQTSAISR (68 aa)), are a transit peptide targeting the mitochondrion. The helical transmembrane segment at 84 to 104 (VGVAGSGAGIGTVFGSLIIGY) threads the bilayer. An N6,N6,N6-trimethyllysine modification is found at lysine 111. A helical membrane pass occupies residues 119-139 (ILGFALSEAMGLFCLMVAFLI).

This sequence belongs to the ATPase C chain family. As to quaternary structure, F-type ATPases have 2 components, CF(1) - the catalytic core - and CF(0) - the membrane proton channel. CF(1) has five subunits: alpha(3), beta(3), gamma(1), delta(1), epsilon(1). CF(0) has three main subunits: a, b and c. Interacts with DNAJC30; interaction is direct. In terms of processing, trimethylated by ATPSCKMT at Lys-111. Methylation is required for proper incorporation of the C subunit into the ATP synthase complex and mitochondrial respiration.

Its subcellular location is the mitochondrion membrane. Functionally, mitochondrial membrane ATP synthase (F(1)F(0) ATP synthase or Complex V) produces ATP from ADP in the presence of a proton gradient across the membrane which is generated by electron transport complexes of the respiratory chain. F-type ATPases consist of two structural domains, F(1) - containing the extramembraneous catalytic core and F(0) - containing the membrane proton channel, linked together by a central stalk and a peripheral stalk. During catalysis, ATP synthesis in the catalytic domain of F(1) is coupled via a rotary mechanism of the central stalk subunits to proton translocation. Part of the complex F(0) domain. A homomeric c-ring of probably 10 subunits is part of the complex rotary element. In Bos taurus (Bovine), this protein is ATP synthase F(0) complex subunit C2, mitochondrial.